A 218-amino-acid polypeptide reads, in one-letter code: GTP cyclohydrolase 1 (218 aa).

Zn(2+) is bound by residues cysteine 107, histidine 110, and cysteine 178.

It belongs to the GTP cyclohydrolase I family. In terms of assembly, homomer.

It catalyses the reaction GTP + H2O = 7,8-dihydroneopterin 3'-triphosphate + formate + H(+). It participates in cofactor biosynthesis; 7,8-dihydroneopterin triphosphate biosynthesis; 7,8-dihydroneopterin triphosphate from GTP: step 1/1. The chain is GTP cyclohydrolase 1 from Azorhizobium caulinodans (strain ATCC 43989 / DSM 5975 / JCM 20966 / LMG 6465 / NBRC 14845 / NCIMB 13405 / ORS 571).